The primary structure comprises 344 residues: Follistatin (344 aa).

Positions 1-29 (MVRPRHQPGGLCLLLLLLCQFMEDRSAQA) are cleaved as a signal peptide. The TB domain maps to 30–103 (GNCWLRQAKN…TCDNVDCGPG (74 aa)). 18 disulfides stabilise this stretch: Cys-32–Cys-55, Cys-42–Cys-88, Cys-56–Cys-91, Cys-95–Cys-106, Cys-100–Cys-116, Cys-118–Cys-150, Cys-122–Cys-143, Cys-132–Cys-164, Cys-168–Cys-179, Cys-173–Cys-189, Cys-192–Cys-225, Cys-196–Cys-218, Cys-207–Cys-239, Cys-245–Cys-256, Cys-250–Cys-267, Cys-270–Cys-302, Cys-274–Cys-295, and Cys-284–Cys-316. The Follistatin-like 1 domain maps to 94-117 (TCDNVDCGPGKKCRMNKKNKPRCV). In terms of domain architecture, Kazal-like 1 spans 112-166 (NKPRCVCAPDCSNITWKGPVCGLDGKTYRNECALLKARCKEQPELEVQYQGKCKK). N-linked (GlcNAc...) asparagine glycosylation is present at Asn-124. The Follistatin-like 2 domain maps to 167–190 (TCRDVNCPGSSTCVVDQTNNAYCV). The 56-residue stretch at 186-241 (NAYCVTCNRICPEPTSSEQYLCGNDGVTYSSACHLRKATCLLGRSIGLAYEGKCIK) folds into the Kazal-like 2 domain. The Follistatin-like 3 domain maps to 244-268 (SCEDIQCTGGKKCLWDFKVGRGRCS). A Kazal-like 3 domain is found at 264–318 (RGRCSLCDELCPDSKSEEPVCASDNATYASECAMKEAACSSGVLLEVKHSGSCNS). The N-linked (GlcNAc...) asparagine glycan is linked to Asn-288. Residues 314–344 (GSCNSISEDTEEEEEDEDQDYSFPISSILEW) form a disordered region. A compositionally biased stretch (acidic residues) spans 321-333 (EDTEEEEEDEDQD).

In terms of assembly, interacts with GDF11. Interacts with activin A/INHBA. Interacts with myostatin/MSTN.

The protein resides in the secreted. It localises to the nucleus. The protein localises to the nucleolus. Multifunctional regulatory protein whose primary function is to antagonize members of the transforming growth factor beta (TGF-beta) superfamily including activin, myostatin, GDF11 or bone morphogenetic proteins (BMPs). Mechanistically, binds to these ligands in the extracellular space, blocking their type II receptor-binding site to inhibit downstream signaling. Plays an essential role in muscle fiber formation and growth both by preventing the repressive effects of myostatin and through SMAD3/AKT/mTOR signaling independently of myostatin. Also promotes neural differentiation by antagonizing the action BMP4. Acts as a specific inhibitor of the biosynthesis and secretion of pituitary follicle stimulating hormone (FSH) by sequestering activin A/INHBA. On the other hand, translocates into the nucleus where it down-regulates rRNA synthesis and ribosome biogenesis to maintain cellular energy homeostasis by binding to rDNA. In Equus caballus (Horse), this protein is Follistatin.